The following is a 192-amino-acid chain: Inner membrane protein YohD (192 aa).

Residues 1–40 (MDLNTLISQYGYAALVIGSLAEGETVTLLGGVAAHQGLLK) lie on the Periplasmic side of the membrane. The helical transmembrane segment at 41 to 61 (FPLVVLSVALGGMIGDQVLYL) threads the bilayer. The Cytoplasmic segment spans residues 62–121 (CGRRFGGKLLRRFSKHQDKIERAQKLIQRHPYLFVIGTRFMYGFRVIGPTLIGASQLPPK). Residues 122 to 142 (IFLPLNILGAFAWALIFTTIG) form a helical membrane-spanning segment. Residues 143-159 (YAGGQVIAPWLHNLDQH) are Periplasmic-facing. Residues 160 to 180 (LKHWVWLILVVVLVVGVRWWL) form a helical membrane-spanning segment. The Cytoplasmic segment spans residues 181–192 (KRRGKKKPDHQA).

The protein belongs to the DedA family.

The protein resides in the cell inner membrane. This chain is Inner membrane protein YohD (yohD), found in Escherichia coli (strain K12).